A 419-amino-acid polypeptide reads, in one-letter code: ATP phosphoribosyltransferase regulatory subunit (419 aa).

The protein belongs to the class-II aminoacyl-tRNA synthetase family. HisZ subfamily. In terms of assembly, heteromultimer composed of HisG and HisZ subunits.

Its subcellular location is the cytoplasm. It functions in the pathway amino-acid biosynthesis; L-histidine biosynthesis; L-histidine from 5-phospho-alpha-D-ribose 1-diphosphate: step 1/9. In terms of biological role, required for the first step of histidine biosynthesis. May allow the feedback regulation of ATP phosphoribosyltransferase activity by histidine. In Ruminiclostridium cellulolyticum (strain ATCC 35319 / DSM 5812 / JCM 6584 / H10) (Clostridium cellulolyticum), this protein is ATP phosphoribosyltransferase regulatory subunit.